Reading from the N-terminus, the 531-residue chain is CTP synthase (531 aa).

The segment at 1–267 is amidoligase domain; sequence MTKYIIITGG…ASKILSKLNL (267 aa). Residue Ser13 coordinates CTP. Ser13 contacts UTP. 14 to 19 contacts ATP; it reads SVGKGT. An L-glutamine-binding site is contributed by Tyr54. Asp71 contacts ATP. Positions 71 and 141 each coordinate Mg(2+). Residues 148–150, 188–193, and Lys224 each bind CTP; these read DIE and KTKPLQ. UTP contacts are provided by residues 188 to 193 and Lys224; that span reads KTKPLQ. One can recognise a Glutamine amidotransferase type-1 domain in the interval 292–531; sequence KIALVGKYTK…IGFLRAAAGV (240 aa). L-glutamine is bound at residue Gly355. Residue Cys382 is the Nucleophile; for glutamine hydrolysis of the active site. Residues 383-386, Glu406, and Arg463 contribute to the L-glutamine site; that span reads YGMQ. Active-site residues include His507 and Glu509.

It belongs to the CTP synthase family. As to quaternary structure, homotetramer.

It carries out the reaction UTP + L-glutamine + ATP + H2O = CTP + L-glutamate + ADP + phosphate + 2 H(+). It catalyses the reaction L-glutamine + H2O = L-glutamate + NH4(+). The catalysed reaction is UTP + NH4(+) + ATP = CTP + ADP + phosphate + 2 H(+). It functions in the pathway pyrimidine metabolism; CTP biosynthesis via de novo pathway; CTP from UDP: step 2/2. Allosterically activated by GTP, when glutamine is the substrate; GTP has no effect on the reaction when ammonia is the substrate. The allosteric effector GTP functions by stabilizing the protein conformation that binds the tetrahedral intermediate(s) formed during glutamine hydrolysis. Inhibited by the product CTP, via allosteric rather than competitive inhibition. Its function is as follows. Catalyzes the ATP-dependent amination of UTP to CTP with either L-glutamine or ammonia as the source of nitrogen. Regulates intracellular CTP levels through interactions with the four ribonucleotide triphosphates. The protein is CTP synthase of Sulfurisphaera tokodaii (strain DSM 16993 / JCM 10545 / NBRC 100140 / 7) (Sulfolobus tokodaii).